A 656-amino-acid polypeptide reads, in one-letter code: Nexilin (656 aa).

Disordered regions lie at residues 1 to 131, 165 to 198, and 215 to 284; these read MNDV…IEQD, RAAANRKDPEDLDREHRNGRVSQEEEKTRHEEEC, and TEAK…VFKE. Low complexity predominate over residues 11 to 26; sequence LLSSSKPVPKSYVPKL. Residues 27–78 are compositionally biased toward basic and acidic residues; it reads GKGDVKDKFEAMQRAREERNQRRSRDEKQRRKEQYIREREWNRRKQEIKDML. Residue S80 is modified to Phosphoserine. Basic and acidic residues-rich tracts occupy residues 103–131, 169–198, and 216–269; these read GKFDEMEKHRQEEQRKRTEEERKRRIEQD, NRKDPEDLDREHRNGRVSQEEEKTRHEEEC, and EAKK…RNMV. Phosphoserine is present on residues S221, S330, S337, and S345. A Phosphothreonine modification is found at T350. Disordered regions lie at residues 468–492 and 529–564; these read NFHEDDDVDVKPAKKSESPFTHKVN and AALQKKREDDEEEEGSIVNGSTTEDEEQTRSGAPWF. Phosphoserine is present on residues S544 and S549. Residue T551 is modified to Phosphothreonine. In terms of domain architecture, Ig-like spans 562 to 650; that stretch reads PWFKKPLRNT…GSAASTCILT (89 aa).

In terms of assembly, interacts with F-actin. Expressed in brain, testis, spleen and fibroblasts (at protein level). Not detected in liver, kidney or epithelial cells (at protein level).

It is found in the cytoplasm. It localises to the cytoskeleton. The protein localises to the cell junction. Its subcellular location is the adherens junction. The protein resides in the myofibril. It is found in the sarcomere. It localises to the z line. Functionally, involved in regulating cell migration through association with the actin cytoskeleton. Has an essential role in the maintenance of Z line and sarcomere integrity. The sequence is that of Nexilin from Rattus norvegicus (Rat).